The sequence spans 245 residues: 1-(5-phosphoribosyl)-5-[(5-phosphoribosylamino)methylideneamino] imidazole-4-carboxamide isomerase (245 aa).

Catalysis depends on Asp12, which acts as the Proton acceptor. Asp131 acts as the Proton donor in catalysis.

It belongs to the HisA/HisF family.

Its subcellular location is the cytoplasm. The catalysed reaction is 1-(5-phospho-beta-D-ribosyl)-5-[(5-phospho-beta-D-ribosylamino)methylideneamino]imidazole-4-carboxamide = 5-[(5-phospho-1-deoxy-D-ribulos-1-ylimino)methylamino]-1-(5-phospho-beta-D-ribosyl)imidazole-4-carboxamide. The protein operates within amino-acid biosynthesis; L-histidine biosynthesis; L-histidine from 5-phospho-alpha-D-ribose 1-diphosphate: step 4/9. The polypeptide is 1-(5-phosphoribosyl)-5-[(5-phosphoribosylamino)methylideneamino] imidazole-4-carboxamide isomerase (Thermobifida fusca (strain YX)).